A 196-amino-acid chain; its full sequence is Urease accessory protein UreE (196 aa).

Positions 150–196 are disordered; sequence RGAYSGGHDHGHAHAHSHAEAHSHAHGESHSHSHSHSHDDHHHHDHD. A compositionally biased stretch (basic and acidic residues) spans 156-196; sequence GHDHGHAHAHSHAEAHSHAHGESHSHSHSHSHDDHHHHDHD.

The protein belongs to the UreE family.

Its subcellular location is the cytoplasm. In terms of biological role, involved in urease metallocenter assembly. Binds nickel. Probably functions as a nickel donor during metallocenter assembly. The protein is Urease accessory protein UreE of Mesorhizobium japonicum (strain LMG 29417 / CECT 9101 / MAFF 303099) (Mesorhizobium loti (strain MAFF 303099)).